The chain runs to 337 residues: 2-oxoglutarate receptor 1 (337 aa).

The Extracellular segment spans residues 1–38 (MIEPLDSPASDSDFLDYPSALGNCTDEQISFKMQYLPV). Asparagine 23 carries an N-linked (GlcNAc...) asparagine glycan. A helical membrane pass occupies residues 39 to 59 (IYSIIFLVGFPGNTVAISIYI). Residues 60–69 (FKMRPWRGST) are Cytoplasmic-facing. A helical membrane pass occupies residues 70 to 90 (VIMLNLALTDLLYLTSLPFLI). Over 91–116 (HYYASGENWIFGDFMCKFIRFGFHFN) the chain is Extracellular. A disulfide bridge connects residues cysteine 106 and cysteine 183. Residues 117–137 (LYSSILFLTCFSLFRYVVIIH) form a helical membrane-spanning segment. The Cytoplasmic segment spans residues 138 to 151 (PMSCFSIQKTRWAV). A helical transmembrane segment spans residues 152 to 172 (VACAGVWVISLVAVMPMTFLI). Residues 173–200 (TSTTRTNRSACLDLTSSDDLTTIKWYNL) are Extracellular-facing. A helical transmembrane segment spans residues 201–221 (ILTATTFCLPLVIVTLCYTTI). The Cytoplasmic portion of the chain corresponds to 222–242 (ISTLTHGPRTHSCFKQKARRL). The helical transmembrane segment at 243-263 (TILLLLVFYICFLPFHILRVI) threads the bilayer. The Extracellular portion of the chain corresponds to 264–284 (RIESRLLSISCSIESHIHEAY). Residues 285-305 (IVSRPLAALNTFGNLLLYVVV) traverse the membrane as a helical segment. The Cytoplasmic segment spans residues 306–337 (SNNFQQAFCSIVRCKASGDLEQGKKDSCSNNP).

Belongs to the G-protein coupled receptor 1 family. Predominantly expressed in the kidney with limited expression in the testis and the smooth muscle. Expressed in SLC26A4/pendrin-positive type B and non-A non-B intercalated cells (at protein level).

The protein localises to the cell membrane. Functionally, g protein-coupled receptor for dicarboxylates and amino dicarboxylates. Receptor for itaconate produced by activated macrophages upon bacterial infection. In the respiratory epithelium, couples the binding of itaconate to the activation of GNA11 and downstream intracellular Ca(2+) release, leading to mucocilliary clearance of airborne pathogens. Receptor for leukotriene E4 (LTE4) produced by mast cells upon allergic inflammation. Binds with high affinity to LTE4 and elicits mucin release from pulmonary epithelium in response to airborne fungi allergens. Regulates mucin-producing goblet cell homeostasis. Receptor for alpha-ketoglutarate produced by proximal tubule renal cells upon metabolic alkalosis. In an intrarenal paracrine signaling pathway, binds alpha-ketoglutarate and drives transepithelial salt reabsorption and bicarbonate secretion by SLC26A4/pendrin-positive intercalated cells. The sequence is that of 2-oxoglutarate receptor 1 (Oxgr1) from Mus musculus (Mouse).